A 415-amino-acid polypeptide reads, in one-letter code: 8-amino-7-oxononanoate synthase (415 aa).

Arg21 provides a ligand contact to substrate. Residue 117–118 (GY) coordinates pyridoxal 5'-phosphate. His149 lines the substrate pocket. Ser195, His223, and Thr251 together coordinate pyridoxal 5'-phosphate. Lys254 is modified (N6-(pyridoxal phosphate)lysine). Thr374 provides a ligand contact to substrate.

It belongs to the class-II pyridoxal-phosphate-dependent aminotransferase family. BioF subfamily. Homodimer. Pyridoxal 5'-phosphate serves as cofactor.

The catalysed reaction is 6-carboxyhexanoyl-[ACP] + L-alanine + H(+) = (8S)-8-amino-7-oxononanoate + holo-[ACP] + CO2. It participates in cofactor biosynthesis; biotin biosynthesis. Catalyzes the decarboxylative condensation of pimeloyl-[acyl-carrier protein] and L-alanine to produce 8-amino-7-oxononanoate (AON), [acyl-carrier protein], and carbon dioxide. This is 8-amino-7-oxononanoate synthase from Ralstonia pickettii (strain 12J).